Consider the following 168-residue polypeptide: SsrA-binding protein (168 aa).

It belongs to the SmpB family.

The protein resides in the cytoplasm. Functionally, required for rescue of stalled ribosomes mediated by trans-translation. Binds to transfer-messenger RNA (tmRNA), required for stable association of tmRNA with ribosomes. tmRNA and SmpB together mimic tRNA shape, replacing the anticodon stem-loop with SmpB. tmRNA is encoded by the ssrA gene; the 2 termini fold to resemble tRNA(Ala) and it encodes a 'tag peptide', a short internal open reading frame. During trans-translation Ala-aminoacylated tmRNA acts like a tRNA, entering the A-site of stalled ribosomes, displacing the stalled mRNA. The ribosome then switches to translate the ORF on the tmRNA; the nascent peptide is terminated with the 'tag peptide' encoded by the tmRNA and targeted for degradation. The ribosome is freed to recommence translation, which seems to be the essential function of trans-translation. The chain is SsrA-binding protein from Mycobacterium sp. (strain JLS).